The primary structure comprises 60 residues: Large ribosomal subunit protein bL32c (60 aa).

This sequence belongs to the bacterial ribosomal protein bL32 family.

The protein localises to the plastid. The protein resides in the chloroplast. In Psilotum nudum (Whisk fern), this protein is Large ribosomal subunit protein bL32c.